Consider the following 164-residue polypeptide: Low molecular weight phosphotyrosine protein phosphatase 2 (164 aa).

The Nucleophile role is filled by Cys-14. Residue Arg-20 is part of the active site. Residue Asp-130 is the Proton donor of the active site.

Belongs to the low molecular weight phosphotyrosine protein phosphatase family. Cone cells and primary pigment cells in developing pupal retina.

Its subcellular location is the cytoplasm. The enzyme catalyses O-phospho-L-tyrosyl-[protein] + H2O = L-tyrosyl-[protein] + phosphate. The catalysed reaction is a phosphate monoester + H2O = an alcohol + phosphate. Catalyzes the dephosphorylation of tyrosine phosphorylated proteins and low-MW aryl phosphates. Can contribute to the regulation of a variety of developmental processes. The chain is Low molecular weight phosphotyrosine protein phosphatase 2 (primo-2) from Drosophila melanogaster (Fruit fly).